Consider the following 130-residue polypeptide: Protein NrdI (130 aa).

Belongs to the NrdI family.

Probably involved in ribonucleotide reductase function. The sequence is that of Protein NrdI from Bartonella bacilliformis (strain ATCC 35685 / KC583 / Herrer 020/F12,63).